A 607-amino-acid chain; its full sequence is MLEISARLEEALNRAFTKVFPQEDRSSKTSSILTGSNLVPASKPEFGDFQINCALSLAKEINRPPRDIAQQIAKQLQQDNDFVRICNPPLIAGPGFINLSINSKTLISEIHFRLNDKRLGVPLKKFNTDKIEEEKSNNRVIIDFSSPNIAKEMHVGHLRSTIIGDSLARVLEFCGYEVLRLNHVGDWGTQFGMLITHLKEVVPEVLHTKDVVEISDLVNFYRQAKKRFDEDQIFQNKSRSEVVNLQAGDKESLIAWQLLCNQSRKEFQKIYDRLDIKLTERGESFYNKFLVDVINDLKNKKLLINDQGAQCIFLDGLVGKDGKPQPIIIQKSDGGFNYATTDLAAIKYRLTIPPHGDGACRLIYVTDAGQASHFSGVFQIAKLANWIPTDCQIEHVPFGLVQGEDGKKLKTRSGETIRLVDLLDEAIQRARDDLKNRLNTESRSENENFIDKVSTTVGIASIKYADLSQNRISNYQFSFDKMLSLQGNTAPYLLYALVRIAGISRKGGDLNVSSQNIQFNESQEWDLIRKLLQLDSIIAEVEKELLPNRLCGYLFELSQTFNRFYDQVPILKASEPSRASRLVLCSITADTLKLGMSLLGIPTLERM.

The 'HIGH' region motif lies at 147-157 (PNIAKEMHVGH).

Belongs to the class-I aminoacyl-tRNA synthetase family. In terms of assembly, monomer.

It is found in the cytoplasm. It catalyses the reaction tRNA(Arg) + L-arginine + ATP = L-arginyl-tRNA(Arg) + AMP + diphosphate. The chain is Arginine--tRNA ligase from Prochlorococcus marinus (strain NATL1A).